A 23-amino-acid polypeptide reads, in one-letter code: M-poneritoxin-Nc1a (23 aa).

This sequence belongs to the non-disulfide-bridged peptide (NDBP) superfamily. Medium-length antimicrobial peptide (group 3) family. Ponericin-W subfamily. Expressed by the venom gland.

It is found in the secreted. It localises to the target cell membrane. Functionally, membrane-perturbating peptide with multiple activities. It is insecticidal, since it induces contractile paralysis in insects (L.cuprina) during several hours, and death after 24 hours. It shows antibacterial activity with higher activity against Gram-positive than Gram-negative bacteria. It is also antiparasitic, since it potently inhibits the larval development of the major pathogenic nematode of ruminants (H.contortus, IC(50)=5.1 uM), but fails to reduce the motility of adult males of the other nematode B.malayi. It also shows cytotoxic activity against HEK293 cells (EC(50)=12-14 uM) and induces hemolysis in human erythrocytes (EC(50)=28.6-48.2 uM). In addition, it causes an important increase in intracellular calcium concentration on neuronal and epithelial cell lines, which supports a non-specific membrane perturbation mechanism of action. In vivo, it induces pain by intraplantar injection into mice, suggesting a defensive function against vertebrate predators. The chain is M-poneritoxin-Nc1a from Neoponera commutata (Large hunting ant).